The chain runs to 206 residues: Thymidylate kinase (206 aa).

11–18 is an ATP binding site; it reads GIDGAGKT.

It belongs to the thymidylate kinase family.

It carries out the reaction dTMP + ATP = dTDP + ADP. In terms of biological role, phosphorylation of dTMP to form dTDP in both de novo and salvage pathways of dTTP synthesis. In Burkholderia mallei (strain NCTC 10247), this protein is Thymidylate kinase.